We begin with the raw amino-acid sequence, 276 residues long: Dermonecrotic toxin LspiSicTox-betaIE4ii (276 aa).

The active site involves His5. Glu25 and Asp27 together coordinate Mg(2+). The active-site Nucleophile is His41. Disulfide bonds link Cys45–Cys51 and Cys47–Cys189. Residue Asp85 coordinates Mg(2+).

This sequence belongs to the arthropod phospholipase D family. Class II subfamily. It depends on Mg(2+) as a cofactor. As to expression, expressed by the venom gland.

It localises to the secreted. It carries out the reaction an N-(acyl)-sphingosylphosphocholine = an N-(acyl)-sphingosyl-1,3-cyclic phosphate + choline. It catalyses the reaction an N-(acyl)-sphingosylphosphoethanolamine = an N-(acyl)-sphingosyl-1,3-cyclic phosphate + ethanolamine. The catalysed reaction is a 1-acyl-sn-glycero-3-phosphocholine = a 1-acyl-sn-glycero-2,3-cyclic phosphate + choline. The enzyme catalyses a 1-acyl-sn-glycero-3-phosphoethanolamine = a 1-acyl-sn-glycero-2,3-cyclic phosphate + ethanolamine. Dermonecrotic toxins cleave the phosphodiester linkage between the phosphate and headgroup of certain phospholipids (sphingolipid and lysolipid substrates), forming an alcohol (often choline) and a cyclic phosphate. This toxin acts on sphingomyelin (SM). It may also act on ceramide phosphoethanolamine (CPE), lysophosphatidylcholine (LPC) and lysophosphatidylethanolamine (LPE), but not on lysophosphatidylserine (LPS), and lysophosphatidylglycerol (LPG). It acts by transphosphatidylation, releasing exclusively cyclic phosphate products as second products. Induces dermonecrosis, hemolysis, increased vascular permeability, edema, inflammatory response, and platelet aggregation. The polypeptide is Dermonecrotic toxin LspiSicTox-betaIE4ii (Loxosceles spinulosa (Recluse spider)).